A 181-amino-acid chain; its full sequence is Protein Syd (181 aa).

Belongs to the Syd family.

It is found in the cell inner membrane. Its function is as follows. Interacts with the SecY protein in vivo. May bind preferentially to an uncomplexed state of SecY, thus functioning either as a chelating agent for excess SecY in the cell or as a regulatory factor that negatively controls the translocase function. The protein is Protein Syd of Shigella flexneri.